A 589-amino-acid chain; its full sequence is Autophagy-related protein 22 (589 aa).

The helical transmembrane segment at 13 to 33 threads the bilayer; it reads GWYAYAWAAEPFMVVAVATYI. A disordered region spans residues 48 to 73; it reads ADDHSQPCDSPPVPFPGDPGVPTDPG. Positions 56 to 66 are enriched in pro residues; the sequence is DSPPVPFPGDP. An N-linked (GlcNAc...) asparagine glycan is attached at Asn-77. 3 consecutive transmembrane segments (helical) span residues 128 to 148, 163 to 183, and 187 to 207; these read TASF…VVVI, LLLF…FITP, and YLGS…TVCG. Positions 221-257 are disordered; the sequence is GTTSEEPSEPSTPSDTSKPASRSENTPLLSASGVDYE. A compositionally biased stretch (polar residues) spans 235-249; that stretch reads DTSKPASRSENTPLL. An N-linked (GlcNAc...) asparagine glycan is attached at Asn-275. 8 consecutive transmembrane segments (helical) span residues 284–304, 315–335, 389–409, 426–446, 457–477, 486–506, 525–545, and 554–574; these read GVAL…YLVI, LALL…LMWL, VALF…INST, AVMG…TPLI, IVVV…GFFF, WELY…NTVC, LFSV…GLIV, and AFYL…MIDM.

The protein belongs to the ATG22 family.

It is found in the vacuole membrane. Its function is as follows. Vacuolar effluxer which mediate the efflux of amino acids resulting from autophagic degradation. The release of autophagic amino acids allows the maintenance of protein synthesis and viability during nitrogen starvation. In Yarrowia lipolytica (strain CLIB 122 / E 150) (Yeast), this protein is Autophagy-related protein 22 (ATG22).